We begin with the raw amino-acid sequence, 294 residues long: ADP-ribosyl-[dinitrogen reductase] glycohydrolase (294 aa).

ADP-D-ribose contacts are provided by residues 100-102 (NTC), E121, H158, and Y212. The Mn(2+) site is built by D243, D245, and T246.

The protein belongs to the ADP-ribosylglycohydrolase family. As to quaternary structure, monomer. The cofactor is Mn(2+).

It is found in the cytoplasm. It carries out the reaction N(omega)-alpha-(ADP-D-ribosyl)-L-arginyl-[dinitrogen reductase] + H2O = L-arginyl-[dinitrogen reductase] + ADP-D-ribose. Functionally, involved in the regulation of nitrogen fixation activity by the reversible ADP-ribosylation of one subunit of the homodimeric dinitrogenase reductase component of the nitrogenase enzyme complex. The ADP-ribosyltransferase (DraT) transfers the ADP-ribose group from NAD to dinitrogenase reductase. The ADP-ribose group is removed through the action of the ADP-ribosylglycohydrolase (DraG, this entry). The sequence is that of ADP-ribosyl-[dinitrogen reductase] glycohydrolase from Rhodospirillum rubrum.